An 834-amino-acid polypeptide reads, in one-letter code: Periplasmic nitrate reductase (834 aa).

The segment at residues 1–32 (MTDMKIDRRQMLKLEAAAIAAAAAGMPSTSLA) is a signal peptide (tat-type signal). Residues 44-100 (LKWDKAACRFCGTGCSVMVATKDNRVVATHGDIKAEVNRGLNCVKGYFLSKIMYGHD) form the 4Fe-4S Mo/W bis-MGD-type domain. [4Fe-4S] cluster is bound by residues C51, C54, C58, and C86. Mo-bis(molybdopterin guanine dinucleotide) contacts are provided by residues K88, Q155, N180, C184, 217-224 (WGSNMAEM), 248-252 (STFEH), 267-269 (QTD), M378, Q382, N488, 514-515 (SD), K537, D564, and 724-733 (TGRVVEHWHS). Position 800 (W800) interacts with substrate. Mo-bis(molybdopterin guanine dinucleotide) is bound by residues N808 and K825.

This sequence belongs to the prokaryotic molybdopterin-containing oxidoreductase family. NasA/NapA/NarB subfamily. As to quaternary structure, component of the periplasmic nitrate reductase NapAB complex composed of NapA and NapB. [4Fe-4S] cluster serves as cofactor. Mo-bis(molybdopterin guanine dinucleotide) is required as a cofactor. In terms of processing, predicted to be exported by the Tat system. The position of the signal peptide cleavage has not been experimentally proven.

It localises to the periplasm. It catalyses the reaction 2 Fe(II)-[cytochrome] + nitrate + 2 H(+) = 2 Fe(III)-[cytochrome] + nitrite + H2O. In terms of biological role, catalytic subunit of the periplasmic nitrate reductase complex NapAB. Receives electrons from NapB and catalyzes the reduction of nitrate to nitrite. The chain is Periplasmic nitrate reductase from Bradyrhizobium sp. (strain BTAi1 / ATCC BAA-1182).